Reading from the N-terminus, the 177-residue chain is Small ribosomal subunit protein uS5 (177 aa).

The S5 DRBM domain occupies 21–84 (LLDRVVKIKR…KQASRSMIHV (64 aa)).

This sequence belongs to the universal ribosomal protein uS5 family. As to quaternary structure, part of the 30S ribosomal subunit. Contacts proteins S4 and S8.

In terms of biological role, with S4 and S12 plays an important role in translational accuracy. Its function is as follows. Located at the back of the 30S subunit body where it stabilizes the conformation of the head with respect to the body. The sequence is that of Small ribosomal subunit protein uS5 from Rhodopirellula baltica (strain DSM 10527 / NCIMB 13988 / SH1).